The primary structure comprises 472 residues: Replicative helicase loading/DNA remodeling protein DnaB (472 aa).

The tract at residues 1-112 is DDBH1; the sequence is MADYWKDVLP…ERLFIYELLP (112 aa). The interval 210 to 302 is DDBH2-1; that stretch reads DLFLAGLSET…VHLREGEQPA (93 aa). Residues 303 to 411 form a DDBH2-2 region; the sequence is EEDSLDGKLI…RQYLEWAEGK (109 aa). Residues 415–472 form a disordered region; that stretch reads SKRNQKVIREEKLPDWMTEKETASDSESGQQKLHPQDLEEQKKKMMEEMQKLKKYSAY. 2 stretches are compositionally biased toward basic and acidic residues: residues 421–437 and 448–465; these read VIRE…KETA and HPQD…EMQK.

This sequence belongs to the DnaB/DnaD family. As to quaternary structure, homotetramer. Also forms higher-order oligomers, can be induced by some ssDNA. The DNA replisome assembles sequentially on oriC in this order; DnaA, DnaD, DnaB, DnaI-DnaC helicase. In atomic force microscopy forms a square with a small central hole. Part of the replication restart primosome which assembles in this order; PriA, DnaD then DnaB. The preferred DNA substrate mimics an arrested DNA replication fork with unreplicated lagging strand. Interacts with DnaC, but probably not as a tetramer. Interacts with DnaD but no interaction with PriA was seen. Interacts with cell cycle regulator CcrZ. In early growth phase only full-length protein is detected, during late growth and stationary phase full-length and C-terminally truncated proteins are seen (at protein level). Truncated protein is only seen in cytoplasmic fractions.

It is found in the cytoplasm. It localises to the cell membrane. Its function is as follows. Helps DnaI load the DnaC replicative helicase onto single-stranded (ss)DNA. During DNA replication from the origin of replication (oriC) in the DNA replisome, DnaD is required after DnaA, before DnaB and before subsequent helicase DnaC loading. Component of the replication restart primosome, which reloads the replicative helicase on sites other than oriC. DnaB, DnaD and DnaI may also be required for a PriA-independent pathway of replication fork restart. DnaB and DnaD work together to allow DnaB access to ssDNA. DNA replication at oriC might originate on the inner face of the cell membrane; DnaB is essential for both replication initiation and cell membrane attachment of the origin region of the chromosome and plasmids. Weakly binds ssDNA, preferentially binds double-stranded (ds)DNA, and replication fork-like substrates. Remodels DNA, laterally compacts supercoiled plasmid and linear DNA, forms beads along the dsDNA. Together DnaB and DnaD form bipolar complexes on plasmid DNA. DnaB and DnaD are also required to load helicase on the repN plasmid origin of replication (oriN). The protein is Replicative helicase loading/DNA remodeling protein DnaB of Bacillus subtilis (strain 168).